The primary structure comprises 213 residues: Riboflavin synthase (213 aa).

2 Lumazine-binding repeats span residues 1–97 (MFTG…IGGH) and 98–195 (LMSG…VDTV). Residues 4–6 (GIV), 48–50 (CLT), 62–67 (DLMKET), 101–103 (GHI), Lys-137, 146–148 (SLT), and 160–165 (HLIPET) each bind 2,4-dihydroxypteridine.

In terms of assembly, homotrimer. Unlike in B.subtilis, does not interact with 6,7-dimethyl-8-ribityllumazine synthase.

It catalyses the reaction 2 6,7-dimethyl-8-(1-D-ribityl)lumazine + H(+) = 5-amino-6-(D-ribitylamino)uracil + riboflavin. It participates in cofactor biosynthesis; riboflavin biosynthesis; riboflavin from 2-hydroxy-3-oxobutyl phosphate and 5-amino-6-(D-ribitylamino)uracil: step 2/2. Catalyzes the dismutation of two molecules of 6,7-dimethyl-8-ribityllumazine, resulting in the formation of riboflavin and 5-amino-6-(D-ribitylamino)uracil. The sequence is that of Riboflavin synthase (ribC) from Escherichia coli (strain K12).